The sequence spans 765 residues: Endothelin-converting enzyme 2 (765 aa).

Residues 1–60 (MSVALQELGGGGNMVEYKRATLRDEDAPETPVEGGASPDAVEAGFRKRTSRLLGLHTQLE) are Cytoplasmic-facing. The chain crosses the membrane as a helical; Signal-anchor for type II membrane protein span at residues 61–81 (LVLAGVSLLLAALLLGCLVAL). At 82 to 765 (GVQYHRDPSH…MNSGQLCEVW (684 aa)) the chain is on the lumenal side. The region spanning 93–765 (TCLTEACIRV…MNSGQLCEVW (673 aa)) is the Peptidase M13 domain. Disulfide bonds link C94–C99, C117–C750, C125–C710, C181–C430, and C639–C762. N-linked (GlcNAc...) asparagine glycosylation is found at N161, N165, N206, N266, N311, N378, and N534. Zn(2+) is bound at residue H602. The active site involves E603. Residue H606 coordinates Zn(2+). 2 N-linked (GlcNAc...) asparagine glycosylation sites follow: N627 and N635. E662 contacts Zn(2+). Residue D666 is the Proton donor of the active site.

This sequence belongs to the peptidase M13 family. Zn(2+) is required as a cofactor. Isoform ECE2-1 and isoform ECE2-2 are expressed in brain and adrenal gland.

The protein resides in the golgi apparatus membrane. It is found in the cytoplasmic vesicle. Its subcellular location is the secretory vesicle membrane. The catalysed reaction is Hydrolysis of the 21-Trp-|-Val-22 bond in big endothelin to form endothelin 1.. Functionally, converts big endothelin-1 to endothelin-1. Also involved in the processing of various neuroendocrine peptides, including neurotensin, angiotensin I, substance P, proenkephalin-derived peptides, and prodynorphin-derived peptides. May play a role in amyloid-beta processing. This is Endothelin-converting enzyme 2 from Bos taurus (Bovine).